The primary structure comprises 338 residues: LIX1-like protein (338 aa).

The segment at 1–65 (METMRAQRLQ…LLLAGAPGLP (65 aa)) is disordered. A compositionally biased stretch (low complexity) spans 29–38 (TGAPTSAATP). Residues 39-56 (PAGPPPAPPPPAPPPPPL) are compositionally biased toward pro residues.

Belongs to the LIX1 family.

This chain is LIX1-like protein (Lix1l), found in Rattus norvegicus (Rat).